We begin with the raw amino-acid sequence, 75 residues long: UPF0235 protein Ava_3894 (75 aa).

Positions 1-32 (MQKKVKVKPNSKQQKIAEQDDGSLTVHLKSPP) are disordered.

Belongs to the UPF0235 family.

This is UPF0235 protein Ava_3894 from Trichormus variabilis (strain ATCC 29413 / PCC 7937) (Anabaena variabilis).